Consider the following 724-residue polypeptide: Phosphoribosylformylglycinamidine synthase subunit PurL (724 aa).

H34 is an active-site residue. ATP-binding residues include Y37 and K75. E77 serves as a coordination point for Mg(2+). Residues 78 to 81 and R100 contribute to the substrate site; that span reads SHNH. The active-site Proton acceptor is the H79. D101 contacts Mg(2+). Q221 provides a ligand contact to substrate. A Mg(2+)-binding site is contributed by D249. 292 to 294 contacts substrate; sequence ESQ. Residues D478 and G515 each contribute to the ATP site. Position 518 (S518) interacts with substrate.

The protein belongs to the FGAMS family. As to quaternary structure, monomer. Part of the FGAM synthase complex composed of 1 PurL, 1 PurQ and 2 PurS subunits.

The protein resides in the cytoplasm. The enzyme catalyses N(2)-formyl-N(1)-(5-phospho-beta-D-ribosyl)glycinamide + L-glutamine + ATP + H2O = 2-formamido-N(1)-(5-O-phospho-beta-D-ribosyl)acetamidine + L-glutamate + ADP + phosphate + H(+). Its pathway is purine metabolism; IMP biosynthesis via de novo pathway; 5-amino-1-(5-phospho-D-ribosyl)imidazole from N(2)-formyl-N(1)-(5-phospho-D-ribosyl)glycinamide: step 1/2. Functionally, part of the phosphoribosylformylglycinamidine synthase complex involved in the purines biosynthetic pathway. Catalyzes the ATP-dependent conversion of formylglycinamide ribonucleotide (FGAR) and glutamine to yield formylglycinamidine ribonucleotide (FGAM) and glutamate. The FGAM synthase complex is composed of three subunits. PurQ produces an ammonia molecule by converting glutamine to glutamate. PurL transfers the ammonia molecule to FGAR to form FGAM in an ATP-dependent manner. PurS interacts with PurQ and PurL and is thought to assist in the transfer of the ammonia molecule from PurQ to PurL. The polypeptide is Phosphoribosylformylglycinamidine synthase subunit PurL (Caldivirga maquilingensis (strain ATCC 700844 / DSM 13496 / JCM 10307 / IC-167)).